The chain runs to 337 residues: Cholinesterase 2 (337 aa).

Residue S99 is the Acyl-ester intermediate of the active site. Cysteines 153 and 165 form a disulfide. The Charge relay system role is filled by E224. N-linked (GlcNAc...) asparagine glycosylation is present at N290.

It belongs to the type-B carboxylesterase/lipase family.

The enzyme catalyses an acylcholine + H2O = a carboxylate + choline + H(+). The chain is Cholinesterase 2 (CHE2) from Branchiostoma lanceolatum (Common lancelet).